Consider the following 440-residue polypeptide: GTPase Der (440 aa).

2 EngA-type G domains span residues 3 to 167 and 176 to 351; these read PIIA…PYDR and TRIA…EQYC. GTP contacts are provided by residues 9–16, 56–60, 119–122, 182–189, 229–233, and 294–297; these read GRPNVGKS, DTGGF, NKVD, DTAGI, and NKWD. Residues 352–436 enclose the KH-like domain; it reads KRVTTGELNR…PLKLIFRGRD (85 aa).

The protein belongs to the TRAFAC class TrmE-Era-EngA-EngB-Septin-like GTPase superfamily. EngA (Der) GTPase family. In terms of assembly, associates with the 50S ribosomal subunit.

GTPase that plays an essential role in the late steps of ribosome biogenesis. In Geobacter sp. (strain M21), this protein is GTPase Der.